The following is a 409-amino-acid chain: Probable type I inositol 1,4,5-trisphosphate 5-phosphatase (409 aa).

The protein belongs to the inositol 1,4,5-trisphosphate 5-phosphatase type I family.

The catalysed reaction is 1D-myo-inositol 1,4,5-trisphosphate + H2O = 1D-myo-inositol 1,4-bisphosphate + phosphate. It carries out the reaction 1D-myo-inositol 1,3,4,5-tetrakisphosphate + H2O = 1D-myo-inositol 1,3,4-trisphosphate + phosphate. The sequence is that of Probable type I inositol 1,4,5-trisphosphate 5-phosphatase (ipp-5) from Caenorhabditis elegans.